Consider the following 288-residue polypeptide: MALFSKKDKYIRINPNRSVREKPQAKPEVPDELFSQCPGCKHTIYQKDLGSERICPHCSYTFRISAQERLALTIDMGTFKELFTGIESKDPLHFPGYQKKLASMREKTGLHEAVVTGTALIKGQTVALGIMDSNFIMASMGTVVGEKITRLFEYATVEKLPVVLFTASGGARMQEGIMSLMQMAKISAAVKRHSNAGLFYLTILTDPTTGGVTASFAMEGDIILAEPQSLVGFAGRRVIENTVRESLPEDFQKAEFLLEHGFVDAIVKRRDLPDTIASLVRLHGGSPR.

Residues L33–R288 enclose the CoA carboxyltransferase N-terminal domain. Zn(2+) contacts are provided by C37, C40, C55, and C58. The C4-type zinc finger occupies C37–C58.

This sequence belongs to the AccD/PCCB family. As to quaternary structure, acetyl-CoA carboxylase is a heterohexamer composed of biotin carboxyl carrier protein (AccB), biotin carboxylase (AccC) and two subunits each of ACCase subunit alpha (AccA) and ACCase subunit beta (AccD). It depends on Zn(2+) as a cofactor.

It is found in the cytoplasm. It carries out the reaction N(6)-carboxybiotinyl-L-lysyl-[protein] + acetyl-CoA = N(6)-biotinyl-L-lysyl-[protein] + malonyl-CoA. The protein operates within lipid metabolism; malonyl-CoA biosynthesis; malonyl-CoA from acetyl-CoA: step 1/1. Its function is as follows. Component of the acetyl coenzyme A carboxylase (ACC) complex. Biotin carboxylase (BC) catalyzes the carboxylation of biotin on its carrier protein (BCCP) and then the CO(2) group is transferred by the transcarboxylase to acetyl-CoA to form malonyl-CoA. The sequence is that of Acetyl-coenzyme A carboxylase carboxyl transferase subunit beta from Streptococcus pneumoniae serotype 4 (strain ATCC BAA-334 / TIGR4).